The sequence spans 184 residues: Peptide deformylase (184 aa).

Fe cation contacts are provided by Cys-92 and His-134. Glu-135 is a catalytic residue. Residue His-138 participates in Fe cation binding.

It belongs to the polypeptide deformylase family. The cofactor is Fe(2+).

The enzyme catalyses N-terminal N-formyl-L-methionyl-[peptide] + H2O = N-terminal L-methionyl-[peptide] + formate. Its function is as follows. Removes the formyl group from the N-terminal Met of newly synthesized proteins. Requires at least a dipeptide for an efficient rate of reaction. N-terminal L-methionine is a prerequisite for activity but the enzyme has broad specificity at other positions. The sequence is that of Peptide deformylase from Psychrobacter arcticus (strain DSM 17307 / VKM B-2377 / 273-4).